The sequence spans 326 residues: Microtubule-associated protein RP/EB family member 2 (326 aa).

Ser-9 carries the phosphoserine modification. Residues 56-158 (TMSRHDIIAW…FIQWFKKFYD (103 aa)) form the Calponin-homology (CH) domain. Tyr-166 carries the phosphotyrosine modification. Disordered regions lie at residues 170 to 239 (EARQ…DKDL) and 298 to 326 (ASDE…QEEY). Residues 186-326 (QIFNLPKKSH…EQQPQQQEEY (141 aa)) form a DCTN1-binding region. The span at 199 to 233 (SPTAGAAKSSPASKPGSTPSRPSSAKRASSSGSAS) shows a compositional bias: low complexity. 2 positions are modified to phosphoserine: Ser-218 and Ser-235. In terms of domain architecture, EB1 C-terminal spans 235–305 (SDKDLETQVI…LYASDEHEGH (71 aa)). The interval 258 to 301 (EGVEKERDFYFGKLREIELLCQEHGQENDDLVQRLMDVLYASDE) is APC-binding. The segment covering 299 to 316 (SDEHEGHPEEPEAEEQVH) has biased composition (basic and acidic residues). Positions 317–326 (EQQPQQQEEY) are enriched in low complexity.

It belongs to the MAPRE family. In terms of assembly, interacts with DCTN1. Interacts with APC (via C-terminal). Interacts with monomeric and polymerized tubulin. Interacts with SLAIN1. Interacts (via the N-terminal region) with BAG1. Interacts with ASB14. Interacts with HAX1; this interaction is essential for epidermal cell migration. Post-translationally, phosphorylated at Ser-235 by CK2 leading to enhanced cell adhesion. Phosphorylated by CDK1 and AURKB during mitosis reduces the binding affinity of MAPRE2 for microtubules. In terms of processing, ubiquitinated in an ASB14-dependent manner; leading to proteasomal degradation.

The protein localises to the cytoplasm. It localises to the cytoskeleton. In terms of biological role, adapter protein that is involved in microtubule polymerization, and spindle function by stabilizing microtubules and anchoring them at centrosomes. Therefore, ensures mitotic progression and genome stability. Acts as a central regulator of microtubule reorganization in apico-basal epithelial differentiation. Plays a role during oocyte meiosis by regulating microtubule dynamics. Participates in neurite growth by interacting with plexin B3/PLXNB3 and microtubule reorganization during apico-basal epithelial differentiation. Also plays an essential role for cell migration and focal adhesion dynamics. Mechanistically, recruits HAX1 to microtubules in order to regulate focal adhesion dynamics. The polypeptide is Microtubule-associated protein RP/EB family member 2 (MAPRE2) (Bos taurus (Bovine)).